The primary structure comprises 1022 residues: Collagen alpha-2(VI) chain (1022 aa).

A signal peptide spans 1-27 (MSRRTAEMFQQAFLSTLLCVALVPLHA). A nonhelical region region spans residues 28–255 (QFDDEPVTSC…CYKMTCLEIA (228 aa)). In terms of domain architecture, VWFA 1 spans 44 to 168 (PISVYFVIDT…VITDGHVTGS (125 aa)). Asn-141 and Asn-215 each carry an N-linked (GlcNAc...) asparagine glycan. Positions 256–590 (GPAGPKGYRG…PGPPGDPGLT (335 aa)) are triple-helical region. The interval 263-587 (YRGQKGAKGN…EGTPGPPGDP (325 aa)) is disordered. Residues 287 to 299 (DPGIEGPIGYPGP) are compositionally biased toward low complexity. A compositionally biased stretch (basic and acidic residues) spans 306–318 (KGEKGEIGSDGRR). N-linked (GlcNAc...) asparagine glycosylation is present at Asn-327. 2 short sequence motifs (cell attachment site) span residues 348–350 (RGD) and 366–368 (RGD). The span at 363 to 377 (QGERGDEGMKGDPGR) shows a compositional bias: basic and acidic residues. Positions 389-399 (EKGSPGIPGNP) are enriched in low complexity. 5 consecutive short sequence motifs (cell attachment site) follow at residues 426-428 (RGD), 444-446 (RGD), 465-467 (RGD), 489-491 (RGD), and 498-500 (RGD). An interruption in collagenous region region spans residues 514 to 519 (GFSYPG). Residues 534–543 (GPKGGRGELG) show a composition bias toward gly residues. The nonhelical region stretch occupies residues 591 to 1022 (DCDVMTYVRE…FFDRFIRWIC (432 aa)). 2 consecutive VWFA domains span residues 613–738 (ALDI…YDPR) and 833–957 (DIVF…ITGS). Residues Asn-630 and Asn-897 are each glycosylated (N-linked (GlcNAc...) asparagine).

It belongs to the type VI collagen family. As to quaternary structure, trimers composed of three different chains: alpha 1(VI), alpha 2(VI), and alpha 3(VI). Post-translationally, prolines at the third position of the tripeptide repeating unit (G-X-Y) are hydroxylated in some or all of the chains.

The protein localises to the secreted. It is found in the extracellular space. The protein resides in the extracellular matrix. Collagen VI acts as a cell-binding protein. The sequence is that of Collagen alpha-2(VI) chain (COL6A2) from Gallus gallus (Chicken).